The following is a 710-amino-acid chain: Early transcription factor 82 kDa subunit (710 aa).

The protein belongs to the poxviridae VETF large subunit family. As to quaternary structure, heterodimer of a 70 kDa and a 82 kDa subunit. Part of the early transcription complex composed of ETF, RAP94/OPG109, and the DNA-directed RNA polymerase.

The protein resides in the virion. Its function is as follows. Acts with RNA polymerase to initiate transcription from early gene promoters. Is recruited by the RPO-associated protein of 94 kDa RAP94/OPG109 to form the early transcription complex, which also contains the core RNA polymerase. ETF heterodimer binds to early gene promoters. This is Early transcription factor 82 kDa subunit (OPG133) from Bos taurus (Bovine).